Consider the following 113-residue polypeptide: Putative pterin-4-alpha-carbinolamine dehydratase (113 aa).

This sequence belongs to the pterin-4-alpha-carbinolamine dehydratase family.

It carries out the reaction (4aS,6R)-4a-hydroxy-L-erythro-5,6,7,8-tetrahydrobiopterin = (6R)-L-erythro-6,7-dihydrobiopterin + H2O. The protein is Putative pterin-4-alpha-carbinolamine dehydratase of Pelodictyon phaeoclathratiforme (strain DSM 5477 / BU-1).